We begin with the raw amino-acid sequence, 200 residues long: Putative NAD(P)H nitroreductase Spy0809 (200 aa).

It depends on FMN as a cofactor.

In Streptococcus pyogenes serotype M6 (strain ATCC BAA-946 / MGAS10394), this protein is Putative NAD(P)H nitroreductase Spy0809.